Here is a 318-residue protein sequence, read N- to C-terminus: Ferrochelatase (318 aa).

Fe cation is bound by residues H186 and E264.

The protein belongs to the ferrochelatase family.

The protein localises to the cytoplasm. It carries out the reaction heme b + 2 H(+) = protoporphyrin IX + Fe(2+). The protein operates within porphyrin-containing compound metabolism; protoheme biosynthesis; protoheme from protoporphyrin-IX: step 1/1. Its function is as follows. Catalyzes the ferrous insertion into protoporphyrin IX. The chain is Ferrochelatase from Chlamydia felis (strain Fe/C-56) (Chlamydophila felis).